A 615-amino-acid polypeptide reads, in one-letter code: Medium-chain acyl-CoA ligase ACSF2, mitochondrial (615 aa).

A mitochondrion-targeting transit peptide spans 1–42 (MAVYVGMLRVARLCARSPRVLGARVGLSRVWQEARLWGVRPL). N6-acetyllysine is present on K179. At K182 the chain carries N6-acetyllysine; alternate. The residue at position 182 (K182) is an N6-succinyllysine; alternate. The residue at position 199 (K199) is an N6-acetyllysine. 263–271 (TSGTTGSPK) serves as a coordination point for ATP. An N6-acetyllysine mark is found at K340 and K398. K478 carries the post-translational modification N6-succinyllysine. D493 and R508 together coordinate ATP. K510 carries the post-translational modification N6-acetyllysine. N6-acetyllysine; alternate occurs at positions 544 and 570. An N6-succinyllysine; alternate mark is found at K544 and K570. Residue K599 participates in ATP binding. Residue K599 is modified to N6-succinyllysine.

This sequence belongs to the ATP-dependent AMP-binding enzyme family.

It localises to the mitochondrion. It catalyses the reaction a medium-chain fatty acid + ATP + CoA = a medium-chain fatty acyl-CoA + AMP + diphosphate. The enzyme catalyses octanoate + ATP + CoA = octanoyl-CoA + AMP + diphosphate. Its function is as follows. Acyl-CoA synthases catalyze the initial reaction in fatty acid metabolism, by forming a thioester with CoA. Has some preference toward medium-chain substrates. Plays a role in adipocyte differentiation. In Bos taurus (Bovine), this protein is Medium-chain acyl-CoA ligase ACSF2, mitochondrial.